Here is a 295-residue protein sequence, read N- to C-terminus: 33 kDa chaperonin (295 aa).

Intrachain disulfides connect C237-C239 and C270-C273.

The protein belongs to the HSP33 family. Post-translationally, under oxidizing conditions two disulfide bonds are formed involving the reactive cysteines. Under reducing conditions zinc is bound to the reactive cysteines and the protein is inactive.

Its subcellular location is the cytoplasm. Redox regulated molecular chaperone. Protects both thermally unfolding and oxidatively damaged proteins from irreversible aggregation. Plays an important role in the bacterial defense system toward oxidative stress. The chain is 33 kDa chaperonin from Symbiobacterium thermophilum (strain DSM 24528 / JCM 14929 / IAM 14863 / T).